Here is a 512-residue protein sequence, read N- to C-terminus: uncharacterized protein (512 aa).

The N-terminal stretch at 1–22 (MVSSLIYSLCAVSGLLATTVNG) is a signal peptide. Asn-167 carries an N-linked (GlcNAc...) asparagine glycan. Positions 251 to 282 (SAASPPIYEPDRQTDPEDPETGRNNNQGFEGL) are disordered.

The protein resides in the secreted. This is an uncharacterized protein from Arthroderma benhamiae (strain ATCC MYA-4681 / CBS 112371) (Trichophyton mentagrophytes).